The primary structure comprises 929 residues: Alanine--tRNA ligase (929 aa).

Positions 619, 623, 722, and 726 each coordinate Zn(2+).

It belongs to the class-II aminoacyl-tRNA synthetase family. The cofactor is Zn(2+).

It localises to the cytoplasm. The catalysed reaction is tRNA(Ala) + L-alanine + ATP = L-alanyl-tRNA(Ala) + AMP + diphosphate. Functionally, catalyzes the attachment of alanine to tRNA(Ala) in a two-step reaction: alanine is first activated by ATP to form Ala-AMP and then transferred to the acceptor end of tRNA(Ala). Also edits incorrectly charged Ser-tRNA(Ala) and Gly-tRNA(Ala) via its editing domain. This Halobacterium salinarum (strain ATCC 29341 / DSM 671 / R1) protein is Alanine--tRNA ligase.